Reading from the N-terminus, the 80-residue chain is UPF0291 protein llmg_1475 (80 aa).

This sequence belongs to the UPF0291 family.

It localises to the cytoplasm. This chain is UPF0291 protein llmg_1475, found in Lactococcus lactis subsp. cremoris (strain MG1363).